The following is a 439-amino-acid chain: Methionine aminopeptidase 2-2 (439 aa).

Residues 1–90 form a disordered region; the sequence is MAAQAPPTDE…SQLFPDKQYP (90 aa). Over residues 10–23 the composition is skewed to basic and acidic residues; the sequence is ELSKLSVEDADNKP. A compositionally biased stretch (acidic residues) spans 35-45; the sequence is DEDDSEDDAED. Over residues 54–68 the composition is skewed to basic residues; the sequence is AKKKKKRKPRKKKKN. His-192 is a binding site for substrate. A divalent metal cation contacts are provided by Asp-212, Asp-223, and His-292. His-300 is a binding site for substrate. Glu-325 and Glu-420 together coordinate a divalent metal cation.

Belongs to the peptidase M24A family. Methionine aminopeptidase eukaryotic type 2 subfamily. Requires Co(2+) as cofactor. Zn(2+) serves as cofactor. Mn(2+) is required as a cofactor. It depends on Fe(2+) as a cofactor.

It is found in the cytoplasm. The enzyme catalyses Release of N-terminal amino acids, preferentially methionine, from peptides and arylamides.. Functionally, cotranslationally removes the N-terminal methionine from nascent proteins. The N-terminal methionine is often cleaved when the second residue in the primary sequence is small and uncharged (Met-Ala-, Cys, Gly, Pro, Ser, Thr, or Val). The sequence is that of Methionine aminopeptidase 2-2 from Chaetomium globosum (strain ATCC 6205 / CBS 148.51 / DSM 1962 / NBRC 6347 / NRRL 1970) (Soil fungus).